A 137-amino-acid chain; its full sequence is Peptide methionine sulfoxide reductase MsrB (137 aa).

A MsrB domain is found at 7–129; the sequence is PEELKNGLSE…NSASLSFTDE (123 aa). Zn(2+) contacts are provided by Cys46, Cys49, Cys95, and Cys98. Cys118 functions as the Nucleophile in the catalytic mechanism.

The protein belongs to the MsrB Met sulfoxide reductase family. Requires Zn(2+) as cofactor.

It catalyses the reaction L-methionyl-[protein] + [thioredoxin]-disulfide + H2O = L-methionyl-(R)-S-oxide-[protein] + [thioredoxin]-dithiol. This chain is Peptide methionine sulfoxide reductase MsrB, found in Klebsiella pneumoniae subsp. pneumoniae (strain ATCC 700721 / MGH 78578).